The following is a 59-amino-acid chain: Large ribosomal subunit protein uL30 (59 aa).

The protein belongs to the universal ribosomal protein uL30 family. Part of the 50S ribosomal subunit.

This is Large ribosomal subunit protein uL30 from Clostridium beijerinckii (strain ATCC 51743 / NCIMB 8052) (Clostridium acetobutylicum).